The sequence spans 286 residues: D-tagatose-1,6-bisphosphate aldolase subunit KbaY (286 aa).

Aspartate 82 functions as the Proton donor in the catalytic mechanism. Zn(2+) is bound by residues histidine 83 and histidine 180. Glycine 181 contacts dihydroxyacetone phosphate. Histidine 208 contacts Zn(2+). Residues glycine 209 to serine 211 and asparagine 230 to threonine 233 contribute to the dihydroxyacetone phosphate site.

This sequence belongs to the class II fructose-bisphosphate aldolase family. TagBP aldolase KbaY subfamily. As to quaternary structure, homotetramer. Forms a complex with KbaZ. Zn(2+) serves as cofactor.

The enzyme catalyses D-tagatofuranose 1,6-bisphosphate = D-glyceraldehyde 3-phosphate + dihydroxyacetone phosphate. It participates in carbohydrate metabolism; D-tagatose 6-phosphate degradation; D-glyceraldehyde 3-phosphate and glycerone phosphate from D-tagatose 6-phosphate: step 2/2. Functionally, catalytic subunit of the tagatose-1,6-bisphosphate aldolase KbaYZ, which catalyzes the reversible aldol condensation of dihydroxyacetone phosphate (DHAP or glycerone-phosphate) with glyceraldehyde 3-phosphate (G3P) to produce tagatose 1,6-bisphosphate (TBP). Requires KbaZ subunit for full activity and stability. The protein is D-tagatose-1,6-bisphosphate aldolase subunit KbaY of Escherichia coli O7:K1 (strain IAI39 / ExPEC).